Consider the following 153-residue polypeptide: Two-component response regulator ARR17 (153 aa).

In terms of domain architecture, Response regulatory spans histidine 21–leucine 149. Aspartate 82 carries the post-translational modification 4-aspartylphosphate.

This sequence belongs to the ARR family. Type-A subfamily. Post-translationally, two-component system major event consists of a His-to-Asp phosphorelay between a sensor histidine kinase (HK) and a response regulator (RR). In plants, the His-to-Asp phosphorelay involves an additional intermediate named Histidine-containing phosphotransfer protein (HPt). This multistep phosphorelay consists of a His-Asp-His-Asp sequential transfer of a phosphate group between first a His and an Asp of the HK protein, followed by the transfer to a conserved His of the HPt protein and finally the transfer to an Asp in the receiver domain of the RR protein.

It localises to the nucleus. In terms of biological role, functions as a response regulator involved in His-to-Asp phosphorelay signal transduction system. Phosphorylation of the Asp residue in the receiver domain activates the ability of the protein to promote the transcription of target genes. Type-A response regulators seem to act as negative regulators of the cytokinin signaling. In Arabidopsis thaliana (Mouse-ear cress), this protein is Two-component response regulator ARR17 (ARR17).